A 64-amino-acid polypeptide reads, in one-letter code: uncharacterized protein (64 aa).

Positions 1–64 are disordered; the sequence is MMITRGWEGW…LDPAISRSSS (64 aa). Residues 16–28 show a composition bias toward gly residues; that stretch reads RGAGTGTGLGGPG.

This is an uncharacterized protein from Homo sapiens (Human).